A 360-amino-acid polypeptide reads, in one-letter code: Alpha-methylacyl-CoA racemase (360 aa).

Residues arginine 38, 59–62 (ADLK), 83–85 (GYR), arginine 91, and 125–130 (GHDINY) each bind substrate. The Proton acceptor role is filled by histidine 126. Aspartate 156 acts as the Proton donor in catalysis.

Belongs to the CoA-transferase III family. As to quaternary structure, homodimer.

The catalysed reaction is a (2S)-2-methylacyl-CoA = a (2R)-2-methylacyl-CoA. It carries out the reaction (2S)-2-methyltetradecanoyl-CoA = (2R)-2-methyltetradecanoyl-CoA. The enzyme catalyses (2R)-pristanoyl-CoA = (2S)-pristanoyl-CoA. It catalyses the reaction (25S)-3-oxocholest-4-en-26-oyl-CoA = (25R)-3-oxocholest-4-en-26-oyl-CoA. The catalysed reaction is (2S)-ibuprofenoyl-CoA = (2R)-ibuprofenoyl-CoA. With respect to regulation, inactivated by N,N-dialkylcarbamoyl-CoA substrate-product analogs. Its function is as follows. Catalyzes the epimerization of (2R)- and (2S)-methylacyl-coenzyme A (CoA) thioesters. Accepts as substrates a wide range of alpha-methylacyl-CoAs, including (2R)-2-methylmyristoyl-CoA and (2S)-2-methylmyristoyl-CoA, (2R)-pristanoyl-CoA and (2S)-pristanoyl-CoA, and the cholesterol esters (25R)-3-oxo-cholest-4-en-26-oyl-CoA and (25S)-3-oxo-cholest-4-en-26-oyl-CoA. Can also catalyze the interconversion of the non-physiologic substrates (2R)-ibuprofenoyl-CoA and (2S)-ibuprofenoyl-CoA, which are potential competitive inhibitors of the enzyme. The chain is Alpha-methylacyl-CoA racemase from Mycobacterium tuberculosis (strain ATCC 25618 / H37Rv).